The sequence spans 149 residues: Nucleoside diphosphate kinase (149 aa).

Lys9, Phe57, Arg85, Thr91, Arg102, and Asn112 together coordinate ATP. The Pros-phosphohistidine intermediate role is filled by His115.

The protein belongs to the NDK family. Homotetramer. It depends on Mg(2+) as a cofactor.

The protein resides in the cytoplasm. It carries out the reaction dZDP + ATP = dZTP + ADP. The enzyme catalyses a 2'-deoxyribonucleoside 5'-diphosphate + ATP = a 2'-deoxyribonucleoside 5'-triphosphate + ADP. The catalysed reaction is a ribonucleoside 5'-diphosphate + ATP = a ribonucleoside 5'-triphosphate + ADP. The protein operates within purine metabolism. Its function is as follows. Major role in the synthesis of nucleoside triphosphates other than ATP. The ATP gamma phosphate is transferred to the NDP beta phosphate via a ping-pong mechanism, using a phosphorylated active-site intermediate. In terms of biological role, (Microbial infection) Catalyzes the phosphorylation of dZDP to dZTP, when the bacterium is infected by a phage that produces the substrate for the synthesis of dZTP (2- amino-2'-deoxyadenosine 5'-triphosphate), which is then used by the phage as a DNA polymerase substrate. This Synechococcus elongatus (strain ATCC 33912 / PCC 7942 / FACHB-805) (Anacystis nidulans R2) protein is Nucleoside diphosphate kinase.